The primary structure comprises 187 residues: Large ribosomal subunit protein mL49 (187 aa).

Belongs to the mitochondrion-specific ribosomal protein mL49 family.

It is found in the mitochondrion. The chain is Large ribosomal subunit protein mL49 (mrpl-49) from Caenorhabditis elegans.